We begin with the raw amino-acid sequence, 166 residues long: 2-C-methyl-D-erythritol 2,4-cyclodiphosphate synthase (166 aa).

Positions 12 and 14 each coordinate a divalent metal cation. 4-CDP-2-C-methyl-D-erythritol 2-phosphate contacts are provided by residues 12-14 (DSH) and 38-39 (HS). Residue His46 coordinates a divalent metal cation. 4-CDP-2-C-methyl-D-erythritol 2-phosphate is bound by residues 60–62 (DIG), 65–69 (FPDTD), and Arg146.

Belongs to the IspF family. In terms of assembly, homotrimer. A divalent metal cation is required as a cofactor.

The enzyme catalyses 4-CDP-2-C-methyl-D-erythritol 2-phosphate = 2-C-methyl-D-erythritol 2,4-cyclic diphosphate + CMP. It functions in the pathway isoprenoid biosynthesis; isopentenyl diphosphate biosynthesis via DXP pathway; isopentenyl diphosphate from 1-deoxy-D-xylulose 5-phosphate: step 4/6. Involved in the biosynthesis of isopentenyl diphosphate (IPP) and dimethylallyl diphosphate (DMAPP), two major building blocks of isoprenoid compounds. Catalyzes the conversion of 4-diphosphocytidyl-2-C-methyl-D-erythritol 2-phosphate (CDP-ME2P) to 2-C-methyl-D-erythritol 2,4-cyclodiphosphate (ME-CPP) with a corresponding release of cytidine 5-monophosphate (CMP). This chain is 2-C-methyl-D-erythritol 2,4-cyclodiphosphate synthase, found in Gemmatimonas aurantiaca (strain DSM 14586 / JCM 11422 / NBRC 100505 / T-27).